An 83-amino-acid polypeptide reads, in one-letter code: ATP synthase subunit c (83 aa).

A run of 2 helical transmembrane segments spans residues 10–30 and 52–72; these read IAVA…FGLL and MFIV…IALF.

Belongs to the ATPase C chain family. In terms of assembly, F-type ATPases have 2 components, F(1) - the catalytic core - and F(0) - the membrane proton channel. F(1) has five subunits: alpha(3), beta(3), gamma(1), delta(1), epsilon(1). F(0) has three main subunits: a(1), b(2) and c(10-14). The alpha and beta chains form an alternating ring which encloses part of the gamma chain. F(1) is attached to F(0) by a central stalk formed by the gamma and epsilon chains, while a peripheral stalk is formed by the delta and b chains.

It is found in the cell inner membrane. Functionally, f(1)F(0) ATP synthase produces ATP from ADP in the presence of a proton or sodium gradient. F-type ATPases consist of two structural domains, F(1) containing the extramembraneous catalytic core and F(0) containing the membrane proton channel, linked together by a central stalk and a peripheral stalk. During catalysis, ATP synthesis in the catalytic domain of F(1) is coupled via a rotary mechanism of the central stalk subunits to proton translocation. Its function is as follows. Key component of the F(0) channel; it plays a direct role in translocation across the membrane. A homomeric c-ring of between 10-14 subunits forms the central stalk rotor element with the F(1) delta and epsilon subunits. The polypeptide is ATP synthase subunit c (Shewanella baltica (strain OS223)).